The sequence spans 280 residues: Ribosomal protein L11 methyltransferase (280 aa).

Residues threonine 131, glycine 152, aspartate 174, and asparagine 217 each coordinate S-adenosyl-L-methionine.

It belongs to the methyltransferase superfamily. PrmA family.

The protein localises to the cytoplasm. It catalyses the reaction L-lysyl-[protein] + 3 S-adenosyl-L-methionine = N(6),N(6),N(6)-trimethyl-L-lysyl-[protein] + 3 S-adenosyl-L-homocysteine + 3 H(+). Functionally, methylates ribosomal protein L11. This Bacteroides fragilis (strain ATCC 25285 / DSM 2151 / CCUG 4856 / JCM 11019 / LMG 10263 / NCTC 9343 / Onslow / VPI 2553 / EN-2) protein is Ribosomal protein L11 methyltransferase.